We begin with the raw amino-acid sequence, 375 residues long: Chaperone protein DnaJ (375 aa).

Positions 5 to 70 (DYYEVLGVER…GKRMAYDQYG (66 aa)) constitute a J domain. The CR-type zinc finger occupies 134–212 (GTTVTIRVPT…CHGQGRVEEH (79 aa)). Cysteine 147, cysteine 150, cysteine 164, cysteine 167, cysteine 186, cysteine 189, cysteine 200, and cysteine 203 together coordinate Zn(2+). CXXCXGXG motif repeat units follow at residues 147 to 154 (CKTCDGSG), 164 to 171 (CTTCGGIG), 186 to 193 (CPRCHGSG), and 200 to 207 (CPDCHGQG).

This sequence belongs to the DnaJ family. Homodimer. It depends on Zn(2+) as a cofactor.

It localises to the cytoplasm. In terms of biological role, participates actively in the response to hyperosmotic and heat shock by preventing the aggregation of stress-denatured proteins and by disaggregating proteins, also in an autonomous, DnaK-independent fashion. Unfolded proteins bind initially to DnaJ; upon interaction with the DnaJ-bound protein, DnaK hydrolyzes its bound ATP, resulting in the formation of a stable complex. GrpE releases ADP from DnaK; ATP binding to DnaK triggers the release of the substrate protein, thus completing the reaction cycle. Several rounds of ATP-dependent interactions between DnaJ, DnaK and GrpE are required for fully efficient folding. Also involved, together with DnaK and GrpE, in the DNA replication of plasmids through activation of initiation proteins. The sequence is that of Chaperone protein DnaJ from Azotobacter vinelandii (strain DJ / ATCC BAA-1303).